A 191-amino-acid chain; its full sequence is NF-kappa-B inhibitor-interacting Ras-like protein 2 (191 aa).

Residues 1–191 form a small GTPase-like region; the sequence is MGKSCKVVVC…KNKGSGSLDG (191 aa). Residue 11–18 participates in GTP binding; that stretch reads GQASVGKT. An Effector region motif is present at residues 35-43; it reads MIETQEDIY. GTP contacts are provided by residues 61–65 and 120–123; these read DTRGL and NKCD. Residues 169–191 form a disordered region; the sequence is TQPQSKSAFPLSRKNKGSGSLDG.

The protein belongs to the small GTPase superfamily. Ras family. KappaB-Ras subfamily. As to quaternary structure, interacts with both NF-kappa-B inhibitor alpha (NFKBIA) and beta (NFKBIB) in vitro. However, it probably only interacts with NFKBIB in vivo. Interacts with GFOD1.

The protein resides in the cytoplasm. Functionally, atypical Ras-like protein that acts as a potent regulator of NF-kappa-B activity by preventing the degradation of NF-kappa-B inhibitor beta (NFKBIB) by most signals, explaining why NFKBIB is more resistant to degradation. May act by blocking phosphorylation of NFKBIB and nuclear localization of p65/RELA NF-kappa-B subunit. It is unclear whether it acts as a GTPase. Both GTP- and GDP-bound forms block phosphorylation of NFKBIB. This Mus musculus (Mouse) protein is NF-kappa-B inhibitor-interacting Ras-like protein 2 (Nkiras2).